An 80-amino-acid chain; its full sequence is CLAVATA3/ESR (CLE)-related protein 14 (80 aa).

The N-terminal stretch at 1–26 is a signal peptide; the sequence is MKVWSQRLSFLIVMIFILAGLHSSSA. Residues Pro-71 and Pro-74 each carry the hydroxyproline modification. Residue Pro-74 is glycosylated (O-linked (Ara...) hydroxyproline).

It belongs to the CLV3/ESR signal peptide family. Interacts with the extracellular leucine-rich repeat region of CLV2 and PEPR2. In terms of processing, the O-glycosylation (arabinosylation) of the hydroxyproline Pro-74 enhances binding affinity of the CLE14p peptide for its receptor. As to expression, mostly expressed in roots, and, to a lower extent, in seedlings and leaves. Expressed in the primary root tip under Pi deficiency.

The protein localises to the secreted. The protein resides in the extracellular space. Functionally, extracellular signal peptide that regulates cell fate. Represses root apical meristem maintenance. Acts as an elicitor of the root meristem differentiation through the CLV2/CRN complex signaling pathway. Inhibits irreversibly root growth by reducing cell division rates in the root apical meristem. Regulates the transition of protophloem cells from proliferation to differentiation, thus impinging on postembryonic growth capacity of the root meristem; this signaling pathway requires CRN and CLV2. The chain is CLAVATA3/ESR (CLE)-related protein 14 from Arabidopsis thaliana (Mouse-ear cress).